The chain runs to 28 residues: Beta-bungarotoxin B chain-like (28 aa).

The N-terminal stretch at 1-24 (MSSGGLLLLLGLLTLCAELTPVSS) is a signal peptide.

Heterodimer; disulfide-linked. The A chains have phospholipase A2 activity and the B chains show homology with the basic protease inhibitors. As to expression, expressed by the venom gland.

The protein resides in the secreted. Its function is as follows. Beta-1-bungarotoxin is a presynaptic neurotoxin of the venom. The B chain is homologous to venom basic protease inhibitors but has no protease inhibitor activity and blocks voltage-gated potassium channels (Kv). The polypeptide is Beta-bungarotoxin B chain-like (Bungarus multicinctus (Many-banded krait)).